Reading from the N-terminus, the 264-residue chain is Small ribosomal subunit protein eS1A (264 aa).

The interval 233-264 (GEGGGTGKPAGDETGAKVERADGYEPPVQESV) is disordered. The span at 242–255 (AGDETGAKVERADG) shows a compositional bias: basic and acidic residues.

Belongs to the eukaryotic ribosomal protein eS1 family. In terms of assembly, component of the small ribosomal subunit. Mature ribosomes consist of a small (40S) and a large (60S) subunit. The 40S subunit contains about 33 different proteins and 1 molecule of RNA (18S). The 60S subunit contains about 49 different proteins and 3 molecules of RNA (28S, 5.8S and 5S). Part of the small subunit (SSU) processome, composed of more than 70 proteins and the RNA chaperone small nucleolar RNA (snoRNA) U3.

It localises to the cytoplasm. It is found in the nucleus. The protein localises to the nucleolus. Component of the small ribosomal subunit. The ribosome is a large ribonucleoprotein complex responsible for the synthesis of proteins in the cell. Part of the small subunit (SSU) processome, first precursor of the small eukaryotic ribosomal subunit. During the assembly of the SSU processome in the nucleolus, many ribosome biogenesis factors, an RNA chaperone and ribosomal proteins associate with the nascent pre-rRNA and work in concert to generate RNA folding, modifications, rearrangements and cleavage as well as targeted degradation of pre-ribosomal RNA by the RNA exosome. May play a role during erythropoiesis. The protein is Small ribosomal subunit protein eS1A (rps3a-a) of Xenopus laevis (African clawed frog).